The sequence spans 313 residues: MTARRVLNPVQRVAIFGGTHGNELSGVFLVNHWLKHGEEIARPGIEVRPFITNPGAVEKCVRYVDTDLNRVFDSENLRNENNLNLSYEVKRAQYINSIFGPKGSEDAYDVILDLHNTTSHMGATLILEDSKDDFTIQMFNYIKTSMAPLACSVLLIEHPRLKYATTRSIAKHPIGVEVGPQPQGVLRADVLDKMRRIIKHALDFINYFNDGKEFLPCILEVFKVLDNVAYPRNANGDCTAIIHNNLQDQDWKELKPGDPMFLTLDGRMIAYEGDCIVYPTFINEAAYYEKNQAFTTTQKMTLCAQAIRCTEPK.

H20 and E23 together coordinate Zn(2+). Substrate is bound by residues R62 and 69–70; that span reads NR. H115 contributes to the Zn(2+) binding site. Substrate-binding positions include 163 to 167, E177, and Y287; that span reads YATTR. E177 is an active-site residue.

It belongs to the AspA/AstE family. Aspartoacylase subfamily. Zn(2+) serves as cofactor.

Its subcellular location is the cytoplasm. The protein localises to the nucleus. It carries out the reaction an N-acyl-L-aspartate + H2O = a carboxylate + L-aspartate. Catalyzes the deacetylation of N-acetylaspartic acid (NAA) to produce acetate and L-aspartate. The protein is Aspartoacylase (aspa) of Xenopus tropicalis (Western clawed frog).